Consider the following 151-residue polypeptide: Protein InSETG-4 (151 aa).

It localises to the cytoplasm. The protein localises to the cytosol. This is Protein InSETG-4 (InSet4-G) from Homo sapiens (Human).